The sequence spans 561 residues: Mercuric reductase (561 aa).

One can recognise an HMA domain in the interval Thr-2–Thr-65. A metal cation contacts are provided by Cys-11 and Cys-14. The FAD site is built by Ala-110, Gly-130, and Thr-135. A disulfide bridge connects residues Cys-136 and Cys-141. Residues Lys-145, Ala-211, Asp-403, and Val-411 each coordinate FAD. Hg(2+) contacts are provided by Cys-558 and Cys-559.

It belongs to the class-I pyridine nucleotide-disulfide oxidoreductase family. In terms of assembly, homodimer. FAD serves as cofactor.

The catalysed reaction is Hg + NADP(+) + H(+) = Hg(2+) + NADPH. Its function is as follows. Resistance to Hg(2+) in bacteria appears to be governed by a specialized system which includes mercuric reductase. MerA protein is responsible for volatilizing mercury as Hg(0). Plays a pivotal role in mercury resistance under thiol-depleted conditions and cell protection. Protects cells under thiol-depleted conditions. The sequence is that of Mercuric reductase (merA) from Pseudomonas aeruginosa.